We begin with the raw amino-acid sequence, 89 residues long: Small ribosomal subunit protein uS15 (89 aa).

The span at 1–10 shows a compositional bias: basic and acidic residues; the sequence is MSLDTTEKQE. The segment at 1–23 is disordered; it reads MSLDTTEKQELINAHQTHATDTG. The span at 14 to 23 shows a compositional bias: polar residues; sequence AHQTHATDTG.

This sequence belongs to the universal ribosomal protein uS15 family. As to quaternary structure, part of the 30S ribosomal subunit. Forms a bridge to the 50S subunit in the 70S ribosome, contacting the 23S rRNA.

Functionally, one of the primary rRNA binding proteins, it binds directly to 16S rRNA where it helps nucleate assembly of the platform of the 30S subunit by binding and bridging several RNA helices of the 16S rRNA. Its function is as follows. Forms an intersubunit bridge (bridge B4) with the 23S rRNA of the 50S subunit in the ribosome. The sequence is that of Small ribosomal subunit protein uS15 from Synechococcus sp. (strain WH7803).